Reading from the N-terminus, the 231-residue chain is Large ribosomal subunit protein uL1 (231 aa).

The protein belongs to the universal ribosomal protein uL1 family. Part of the 50S ribosomal subunit.

Binds directly to 23S rRNA. The L1 stalk is quite mobile in the ribosome, and is involved in E site tRNA release. Functionally, protein L1 is also a translational repressor protein, it controls the translation of the L11 operon by binding to its mRNA. This chain is Large ribosomal subunit protein uL1, found in Herminiimonas arsenicoxydans.